The chain runs to 175 residues: Large ribosomal subunit protein uL10 (175 aa).

Belongs to the universal ribosomal protein uL10 family. As to quaternary structure, part of the ribosomal stalk of the 50S ribosomal subunit. The N-terminus interacts with L11 and the large rRNA to form the base of the stalk. The C-terminus forms an elongated spine to which L12 dimers bind in a sequential fashion forming a multimeric L10(L12)X complex.

In terms of biological role, forms part of the ribosomal stalk, playing a central role in the interaction of the ribosome with GTP-bound translation factors. In Xylella fastidiosa (strain M23), this protein is Large ribosomal subunit protein uL10.